Here is a 312-residue protein sequence, read N- to C-terminus: Retron Ec83 reverse transcriptase (312 aa).

A Reverse transcriptase domain is found at Pro14–Leu239. Mg(2+) is bound by residues Asp97, Asp185, and Asp186.

Belongs to the bacterial reverse transcriptase family.

It carries out the reaction DNA(n) + a 2'-deoxyribonucleoside 5'-triphosphate = DNA(n+1) + diphosphate. Its function is as follows. Reverse transcriptase (RT) component of antiviral defense system retron Ec83, composed of a non-coding RNA (ncRNA), this reverse transcriptase (RT), a probable ATPase and a putative HNH endonuclease. Expression of retron Ec83 confers protection against bacteriophages T2, T4 and T6. At multiplicity of infection (MOI) of 0.02 cultures slow growth when infected with T4 but do not collapse, at MOI 2 cultures enter growth stasis. Responsible for synthesis of msDNA-Ec83 (a linear ssDNA with a 5'-terminal phosphate residue). Unlike most known msDNAs the mature product from the original strain does not have an RNA component. When the ncRNA plus RT are expressed in strain K12 / JM109 only linear DNA is seen in stationary phase cells, but logarithmic phase cells have both a linear and branched msDNA (a branched molecule with RNA linked by a 2',5'-phosphodiester bond to ssDNA, a 'classic' retron). The branched msDNA is probably the precursor for the mature linear msDNA, the precursor is cleaved endonucleolytically by ExoVII (xseA-xseB) leaving the observed mature 5'-phosphate ssDNA terminus. The retron transcript serves as primer (from a conserved internal G residue) and template for the reaction, and codes for the RT. Overexpression of the ncRNA and RT, which leads to increased levels of msDNA, is mutagenic in vivo. This may be due to a mismatch in the msDNA stem which binds and sequesters MutS and/or MutL. The chain is Retron Ec83 reverse transcriptase from Escherichia coli.